The primary structure comprises 568 residues: Sphingosine-1-phosphate lyase 1 (568 aa).

Over 1–41 (MPSTDLLTLKAFEPYLEILEVYSTKAKNYVNGHCTKYEPWQ) the chain is Lumenal. A helical; Signal-anchor for type III membrane protein transmembrane segment spans residues 42 to 62 (LIAWSVVWTLLIVWGYEFVFQ). Residues 63 to 568 (PESLWSRFKK…SQMNGSPKPH (506 aa)) are Cytoplasmic-facing. The residue at position 353 (K353) is an N6-(pyridoxal phosphate)lysine; alternate. K353 bears the N6-acetyllysine; alternate mark. Residues Y356 and Y366 each carry the 3'-nitrotyrosine modification. S564 carries the phosphoserine modification.

This sequence belongs to the group II decarboxylase family. Sphingosine-1-phosphate lyase subfamily. Homodimer. Requires pyridoxal 5'-phosphate as cofactor.

The protein resides in the endoplasmic reticulum membrane. It carries out the reaction sphinganine 1-phosphate = hexadecanal + phosphoethanolamine. The catalysed reaction is sphing-4-enine 1-phosphate = (2E)-hexadecenal + phosphoethanolamine. The protein operates within lipid metabolism; sphingolipid metabolism. In terms of biological role, cleaves phosphorylated sphingoid bases (PSBs), such as sphingosine-1-phosphate, into fatty aldehydes and phosphoethanolamine. Elevates stress-induced ceramide production and apoptosis. Required for global lipid homeostasis in liver and cholesterol homeostasis in fibroblasts. Involved in the regulation of pro-inflammatory response and neutrophil trafficking. Modulates neuronal autophagy via phosphoethanolamine production which regulates accumulation of aggregate-prone proteins such as APP. Seems to play a role in establishing neuronal contact sites and axonal maintenance. The chain is Sphingosine-1-phosphate lyase 1 from Pongo abelii (Sumatran orangutan).